The following is a 397-amino-acid chain: uncharacterized protein (397 aa).

Cys-47, Cys-53, Cys-56, and Cys-131 together coordinate [4Fe-4S] cluster. Positions 235, 262, 282, and 328 each coordinate S-adenosyl-L-methionine. Cys-354 functions as the Nucleophile in the catalytic mechanism.

The protein belongs to the class I-like SAM-binding methyltransferase superfamily. RNA M5U methyltransferase family.

This is an uncharacterized protein from Zymomonas mobilis subsp. mobilis (strain ATCC 31821 / ZM4 / CP4).